Reading from the N-terminus, the 450-residue chain is Phosphoglucosamine mutase (450 aa).

Catalysis depends on serine 107, which acts as the Phosphoserine intermediate. Mg(2+) is bound by residues serine 107, aspartate 246, aspartate 248, and aspartate 250. The residue at position 107 (serine 107) is a Phosphoserine.

It belongs to the phosphohexose mutase family. It depends on Mg(2+) as a cofactor. Post-translationally, activated by phosphorylation.

The catalysed reaction is alpha-D-glucosamine 1-phosphate = D-glucosamine 6-phosphate. Functionally, catalyzes the conversion of glucosamine-6-phosphate to glucosamine-1-phosphate. The protein is Phosphoglucosamine mutase of Dechloromonas aromatica (strain RCB).